The chain runs to 312 residues: Very-long-chain 3-oxoacyl-CoA reductase (312 aa).

A helical transmembrane segment spans residues 4–24 (ALPAAGFLYWVGASTVAYLAL). NADP(+) is bound at residue 50 to 79 (GEWAVVTGGTDGIGKSYAEELAKRGMKIVL). Transmembrane regions (helical) follow at residues 182–202 (GAIL…LTIY) and 271–291 (GYPI…WLYF). S189 contributes to the substrate binding site. Y202 serves as the catalytic Proton acceptor. A Di-lysine motif motif is present at residues 308 to 312 (KMKMN).

It belongs to the short-chain dehydrogenases/reductases (SDR) family. 17-beta-HSD 3 subfamily.

It is found in the endoplasmic reticulum membrane. The catalysed reaction is a very-long-chain (3R)-3-hydroxyacyl-CoA + NADP(+) = a very-long-chain 3-oxoacyl-CoA + NADPH + H(+). It catalyses the reaction 17beta-estradiol + NAD(+) = estrone + NADH + H(+). It carries out the reaction 17beta-estradiol + NADP(+) = estrone + NADPH + H(+). The enzyme catalyses 3-oxooctadecanoyl-CoA + NADPH + H(+) = (3R)-hydroxyoctadecanoyl-CoA + NADP(+). The catalysed reaction is (7Z,10Z,13Z,16Z)-3-oxodocosatetraenoyl-CoA + NADPH + H(+) = (3R)-hydroxy-(7Z,10Z,13Z,16Z)-docosatetraenoyl-CoA + NADP(+). It catalyses the reaction 3-oxo-(7Z,10Z,13Z,16Z,19Z)-docosapentaenoyl-CoA + NADPH + H(+) = (3R)-hydroxy-(7Z,10Z,13Z,16Z,19Z)-docosapentaenoyl-CoA + NADP(+). It carries out the reaction (8Z,11Z,14Z)-3-oxoeicosatrienoyl-CoA + NADPH + H(+) = (3R)-hydroxy-(8Z,11Z,14Z)-eicosatrienoyl-CoA + NADP(+). The protein operates within lipid metabolism; fatty acid biosynthesis. It participates in steroid biosynthesis; estrogen biosynthesis. Functionally, catalyzes the second of the four reactions of the long-chain fatty acids elongation cycle. This endoplasmic reticulum-bound enzymatic process, allows the addition of two carbons to the chain of long- and very long-chain fatty acids/VLCFAs per cycle. This enzyme has a 3-ketoacyl-CoA reductase activity, reducing 3-ketoacyl-CoA to 3-hydroxyacyl-CoA, within each cycle of fatty acid elongation. Thereby, it may participate in the production of VLCFAs of different chain lengths that are involved in multiple biological processes as precursors of membrane lipids and lipid mediators. May also catalyze the transformation of estrone (E1) into estradiol (E2) and play a role in estrogen formation. The chain is Very-long-chain 3-oxoacyl-CoA reductase (HSD17B12) from Bos taurus (Bovine).